A 706-amino-acid chain; its full sequence is MDKLTPSQWKVINKSYEPASTIKVIAGPGSGKTLTLLYKVLHLITVENIKPEEILIFSLTNKAVDSIIENLLSIFENSHTNKEIVHQIGCYTVHGLANRIVVENEGMINIIEEIGWRGLMKLLPPSKRTPHHFRSYKELEKVVKDYKLNNAKNNNPVIEKLVELMDNCKVMTNDDLIIRAKKYLELDSSDSDASSFTQDLRNKYKVVLIDEFQDLYPSLAPLITMICKGKQLIMFGDTNQSIYGFLGSNNEIMSQLDNLHPKNSTTVLKLFDNFRSTPEIISLASKIINRPLAEKQIIDDTDETPSELVRKLPSGVSPQIMTFDDLAAESEFIIDKITQLICSSAKFSDIAILSRTNSHLTAIASILKKYGIPYQKLKSQPDWMDDLRIQFLLDILKVCSLASDEKHNREFNTGDKWQSNFSILVTMSALKGIGDASIQALYKACSLKNLSIWKYLTMVPNFEWPLGLSIKKKMENYTSNLYEMIENDQVHQLDDPMELLEKVASITNNLNLNPTYFQSLSDAQSSLEFKTHLQEMAQVMKVSKSNKPPGISFVKWFLETYFDQTMVFHQSQQALQTTGPGTVKLSTIHSAKGLEFPIVFLTNGSMSNFPMDTNALYVGITRARNLLYMCNMKHERLVSKSSPYSRNIMSNNLFWTYYNKDLKRSVCDVKVTHGYNVQRYNQLRKNFGFYRAYSSLRGCKSVFRRI.

In terms of domain architecture, UvrD-like helicase ATP-binding spans 5–277 (TPSQWKVINK…LKLFDNFRST (273 aa)). ATP-binding positions include 29–34 (GSGKTL) and arginine 275. Positions 278 to 593 (PEIISLASKI…KLSTIHSAKG (316 aa)) constitute a UvrD-like helicase C-terminal domain. The propeptide at 693-706 (YSSLRGCKSVFRRI) is cleaved upon import into mitochondrion.

The protein belongs to the helicase family. UvrD subfamily. Requires Mg(2+) as cofactor.

The protein localises to the mitochondrion inner membrane. It catalyses the reaction Couples ATP hydrolysis with the unwinding of duplex DNA by translocating in the 3'-5' direction.. The enzyme catalyses ATP + H2O = ADP + phosphate + H(+). Its function is as follows. Required for mitochondrial genome maintenance and mitochondrial DNA inheritance. The sequence is that of ATP-dependent DNA helicase HMI1, mitochondrial (HMI1) from Saccharomyces cerevisiae (strain ATCC 204508 / S288c) (Baker's yeast).